The following is a 357-amino-acid chain: MLLVAFVTLLVAVALQPLPSVLSLDVHLLRQLAAKHNVTSILVFGDSSVDPGNNNFIKTEMKGNFPPYGENFINHKPTGRLCDGLLAPDYIAEAMGYPPIPAFLDPSLTQADLTRGASFASAGSGYDDLTANISNVWSFTTQANYFLHYKIHLTKLVGPLESAKMINNAIFLMSMGSNDFLQNYLVDFTRQKQFTVEQYIEFLSHRMLYDAKMLHRLGAKRLVVVGVPPMGCMPLIKYLRGQKTCVDQLNQIAFSFNAKIIKNLELLQSKIGLKTIYVDAYSTIQEAIKNPRKFGFVEASLGCCGTGTYEYGETCKDMQVCKDPTKYVFWDAVHPTQRMYQIIVKKAIASISEEFLV.

The signal sequence occupies residues 1 to 23; it reads MLLVAFVTLLVAVALQPLPSVLS. Asparagine 37 carries an N-linked (GlcNAc...) asparagine glycan. Serine 47 serves as the catalytic Nucleophile. The N-linked (GlcNAc...) asparagine glycan is linked to asparagine 132. Catalysis depends on residues aspartate 331 and histidine 334.

Belongs to the 'GDSL' lipolytic enzyme family.

It localises to the secreted. In Arabidopsis thaliana (Mouse-ear cress), this protein is GDSL esterase/lipase At5g45950.